Consider the following 2623-residue polypeptide: Immunoglobulin superfamily member 10 (2623 aa).

The signal sequence occupies residues 1–28 (MKVKGRGITCLLVSFAVICLVATPGGKA). The LRRNT domain occupies 29 to 56 (CPRRCACYMPTEVHCTFRYLTSIPDSIP). 6 LRR repeats span residues 58–79 (NVERINLGYNSLVRLMETDFSG), 82–103 (KLELLMLHSNGIHTIPDKTFSD), 106–127 (ALQVLKMSYNKVRKLQKDTFYG), 130–151 (SLTRLHMDHNNIEFINPEVFYG), 154–175 (FLRLVHLEGNQLTKLHPDTFVS), and 186–207 (FIKFLYLSDNFLTSLPQEMVSY). One can recognise an LRRCT domain in the interval 219–281 (NPWTCDCHLK…VSAAAFQCAK (63 aa)). N-linked (GlcNAc...) asparagine glycans are attached at residues Asn-319 and Asn-439. 2 consecutive Ig-like C2-type domains span residues 461–567 (PRAE…YRIT) and 571–661 (PLVE…FQVS). 2 cysteine pairs are disulfide-bonded: Cys-497–Cys-551 and Cys-595–Cys-645. Residue Asn-627 is glycosylated (N-linked (GlcNAc...) asparagine). Disordered regions lie at residues 668 to 692 (RPLEHDGETEGSGLDESNPIAHLKE) and 767 to 788 (AMPDKRENTTVSPPPVVTQLPN). 2 N-linked (GlcNAc...) asparagine glycosylation sites follow: Asn-774 and Asn-999. Disordered stretches follow at residues 1334-1376 (TQTE…AMTP) and 1434-1453 (STIASETTLSSKSHQSTTTR). Residues 1335–1356 (QTERSRAQTIQREQEPQKKNRT) are compositionally biased toward basic and acidic residues. A compositionally biased stretch (polar residues) spans 1357-1373 (DPNISPDQSSGFTTPTA). 10 Ig-like C2-type domains span residues 1648–1739 (PRIV…VTLS), 1745–1836 (PRIL…VKIQ), 1841–1933 (PPVI…VMLT), 1941–2034 (PRIE…VSLR), 2037–2135 (PAKI…VHLT), 2141–2229 (PRIR…YKLD), 2234–2331 (PPLI…LEVL), 2337–2427 (PTFR…VILE), 2432–2518 (PVIL…TLIT), and 2528–2623 (PRIT…IQVI). Intrachain disulfides connect Cys-1670/Cys-1723, Cys-1767/Cys-1820, and Cys-1864/Cys-1917. N-linked (GlcNAc...) asparagine glycosylation is found at Asn-1899 and Asn-1962. 7 disulfide bridges follow: Cys-1963-Cys-2016, Cys-2060-Cys-2119, Cys-2163-Cys-2213, Cys-2261-Cys-2313, Cys-2359-Cys-2411, Cys-2454-Cys-2506, and Cys-2550-Cys-2605. N-linked (GlcNAc...) asparagine glycosylation is present at Asn-2101. Tyr-2603 is modified (phosphotyrosine).

Its subcellular location is the secreted. In terms of biological role, involved in the control of early migration of neurons expressing gonadotropin-releasing hormone (GNRH neurons). May be involved in the maintenance of osteochondroprogenitor cells pool. This chain is Immunoglobulin superfamily member 10 (IGSF10), found in Homo sapiens (Human).